The following is a 392-amino-acid chain: G2/mitotic-specific cyclin-B2 (392 aa).

Belongs to the cyclin family. Cyclin AB subfamily. Interacts with the CDK1 protein kinase to form a serine/threonine kinase holoenzyme complex also known as maturation promoting factor (MPF). The cyclin subunit imparts substrate specificity to the complex.

Essential for the control of the cell cycle at the G2/M (mitosis) transition. The polypeptide is G2/mitotic-specific cyclin-B2 (CCNB2) (Rana japonica (Japanese reddish frog)).